The primary structure comprises 63 residues: Acrosin inhibitor 1 (63 aa).

Residues 8-63 form the Kazal-like domain; it reads FGFPPDCKVYTEACTREYNPICDSAAKTYSNECTFCNEKMNNDADIHFNHFGECEY. Disulfide bonds link Cys-14/Cys-43, Cys-21/Cys-40, and Cys-29/Cys-61.

In terms of tissue distribution, seminal plasma.

The protein resides in the secreted. Strong inhibitor of acrosin. The polypeptide is Acrosin inhibitor 1 (Bos taurus (Bovine)).